The following is a 710-amino-acid chain: Polyribonucleotide nucleotidyltransferase (710 aa).

2 residues coordinate Mg(2+): Asp-491 and Asp-497. Residues 558–618 (PRIYKIQVKP…SAAQKAIEII (61 aa)) form the KH domain. One can recognise an S1 motif domain in the interval 628-696 (GRIYMGKVTR…ELGRVRLSRK (69 aa)).

Belongs to the polyribonucleotide nucleotidyltransferase family. The cofactor is Mg(2+).

The protein resides in the cytoplasm. It catalyses the reaction RNA(n+1) + phosphate = RNA(n) + a ribonucleoside 5'-diphosphate. Involved in mRNA degradation. Catalyzes the phosphorolysis of single-stranded polyribonucleotides processively in the 3'- to 5'-direction. This chain is Polyribonucleotide nucleotidyltransferase, found in Thermodesulfovibrio yellowstonii (strain ATCC 51303 / DSM 11347 / YP87).